The sequence spans 386 residues: DNase toxin Tse7 (386 aa).

Interacts with Tsi7.

The catalysed reaction is Endonucleolytic cleavage to 5'-phosphodinucleotide and 5'-phosphooligonucleotide end-products.. Type VI secretion exported toxin that via to its DNase activity induces growth arrest and ultimately DNA degradation within target cell. The activity is initially neutralized by a cognate immunity protein Tsi7. The polypeptide is DNase toxin Tse7 (Pseudomonas aeruginosa (strain ATCC 15692 / DSM 22644 / CIP 104116 / JCM 14847 / LMG 12228 / 1C / PRS 101 / PAO1)).